A 239-amino-acid polypeptide reads, in one-letter code: tRNA (guanine-N(7)-)-methyltransferase (239 aa).

4 residues coordinate S-adenosyl-L-methionine: Glu69, Glu94, Asp121, and Asp144. The active site involves Asp144. Substrate is bound at residue Lys148. The interaction with RNA stretch occupies residues 150 to 155 (RHNKRR). Residues Asp180 and 217-220 (TKFE) contribute to the substrate site.

Belongs to the class I-like SAM-binding methyltransferase superfamily. TrmB family. Monomer.

The enzyme catalyses guanosine(46) in tRNA + S-adenosyl-L-methionine = N(7)-methylguanosine(46) in tRNA + S-adenosyl-L-homocysteine. It functions in the pathway tRNA modification; N(7)-methylguanine-tRNA biosynthesis. Catalyzes the formation of N(7)-methylguanine at position 46 (m7G46) in tRNA. The polypeptide is tRNA (guanine-N(7)-)-methyltransferase (Salmonella choleraesuis (strain SC-B67)).